The primary structure comprises 535 residues: Expansin-like protein 9 (535 aa).

The signal sequence occupies residues 1–25 (MKINKNNYFKIIIFIIYVIINLINA). Asn24 is a glycosylation site (N-linked (GlcNAc...) asparagine). Over 26–514 (SDNVKLSNCG…DNSSNILLFS (489 aa)) the chain is Extracellular. Residues 31 to 144 (LSNCGQARAE…QEVSCGFLGN (114 aa)) form the Expansin-like EG45 domain. Cystine bridges form between Cys34/Cys75 and Cys78/Cys139. N-linked (GlcNAc...) asparagine glycans are attached at residues Asn122, Asn257, and Asn292. Residues 459–487 (VDGSSNDDDGTGGTGGGASNKVGKRVDGE) are disordered. A glycan (N-linked (GlcNAc...) asparagine) is linked at Asn506. The chain crosses the membrane as a helical span at residues 515 to 535 (FNITLTFLLLSLIINILLLLF).

Belongs to the expansin family. Expansin A subfamily.

It is found in the membrane. In terms of biological role, may serve to lubricate the movement of the cellulose microfibrils during cell growth and wall extension and/or may serve to maintain the fluid state of the slug cell wall. The sequence is that of Expansin-like protein 9 (expl9) from Dictyostelium discoideum (Social amoeba).